A 266-amino-acid polypeptide reads, in one-letter code: MKTPIAIGAEKKSLITPLPASIDPLRLPEHIAIIMDGNGRWANAKKLPRAMGHSAGVDALKQTLRLCNDWGIGVLTVYAFSTENWSRPKEEVNFLMTLFERVLKKELEALNLEEVQISFLGDLDQLPTRLQDLINEATELTSGNNGIRFNVCTNYGGRRELVLAAQKLAQRVLQGDLDPSFIDEHTFAGELLTSSYADPDLLIRTSGEMRISNFLLWQLAYAEIHVTDTLWPDFDSISLTKALIDYQSRRRRFGGVDPTVNDYDQV.

Aspartate 36 is an active-site residue. Residue aspartate 36 coordinates Mg(2+). Substrate is bound by residues 37 to 40 (GNGR), tryptophan 41, arginine 49, histidine 53, and 81 to 83 (STE). Asparagine 84 (proton acceptor) is an active-site residue. Substrate is bound by residues tryptophan 85, arginine 87, arginine 204, and 210-212 (RIS). Glutamate 223 lines the Mg(2+) pocket.

Belongs to the UPP synthase family. As to quaternary structure, homodimer. The cofactor is Mg(2+).

Catalyzes the condensation of isopentenyl diphosphate (IPP) with allylic pyrophosphates generating different type of terpenoids. The polypeptide is Isoprenyl transferase (Prochlorococcus marinus (strain SARG / CCMP1375 / SS120)).